The primary structure comprises 22 residues: Ocellatin-LB1 (22 aa).

M22 is subject to Methionine amide.

Expressed by the skin glands.

Its subcellular location is the secreted. Its function is as follows. Antibacterial peptide that inhibits Gram-negative bacteria A.actinomycetemcomitans ATCC 29522 (MIC=222.37 uM) and E.coli ATCC 25922 (MIC=114.04 uM). Also has antifungal activity against C.albicans ATCC 18804 (MIC=233.55 uM) and C.lusitaniae ATCC 56936 (MIC=233.55 uM). No activity against the Gram-positive bacterium S.aureus ATCC 25923. Shows virtually no hemolytic activity towards rabbit erythrocytes. This Leptodactylus labyrinthicus (Labyrinth frog) protein is Ocellatin-LB1.